A 532-amino-acid chain; its full sequence is MKTSEELRLAPDSLPSDLVPAPVLQASPADKNTDSEPVPPPCGGDDQLQVATDAVASSVVSQELQQGDSAPLEVEFNISSELSPRIEEQEVPENASLPVEETNRPELESGEAMEGVSEEPAAVDEGDIFWSYSFSQVPQYLSGSWSEFSTRSENFLKGCKWAPDGSCILTNSADNVLRIYNLPPELYSESEQVDYAEMVPVLRMVEGDTIYDYCWYSLMSSTQPDTSYVASSSRENPIHIWDAFTGELRASFRAYNHLDELTAAHSLCFSPDGSQLFCGFNRTVRVFSTSRPGRDCEVRTTFAKKQGQSGIISCLAFSPAQPLYACGSYGRTLGLYAWDDGSPLALLGGHQGGITHLCFHPDGNLFFSGARKDAELLCWDLRQPGHLLWSLSREVTTNQRIYFDLDPSGQFLVSGNTSGVVSVWDISGAFSDCKQLEPVMTFLPQDDCTNGVSLHPTLPLLATASGQRMFPEPTNSGDEGEPELDLPLLSLRHAHPECQLQLWWCGGGPDPSNPDEDQDEKGQGRTEAVGMS.

The tract at residues 1-48 is disordered; the sequence is MKTSEELRLAPDSLPSDLVPAPVLQASPADKNTDSEPVPPPCGGDDQL. A phosphoserine mark is found at serine 27, serine 61, and serine 83. The tract at residues 83-115 is disordered; that stretch reads SPRIEEQEVPENASLPVEETNRPELESGEAMEG. WD repeat units lie at residues 151 to 190, 206 to 251, 256 to 297, 307 to 348, 349 to 389, and 395 to 434; these read RSEN…YSES, EGDT…LRAS, NHLD…RDCE, GQSG…ALLG, GHQG…HLLW, and VTTN…SDCK. Threonine 474 is modified (phosphothreonine). Serine 476 is modified (phosphoserine). Residues 505 to 532 are disordered; the sequence is CGGGPDPSNPDEDQDEKGQGRTEAVGMS.

It belongs to the TCAB1 family. In terms of assembly, component of the telomerase holoenzyme complex composed of one molecule of TERT, one molecule of WRAP53/TCAB1, two molecules of H/ACA ribonucleoprotein complex subunits DKC1, NOP10, NHP2 and GAR1, and a telomerase RNA template component (TERC). The telomerase holoenzyme complex is associated with TEP1, SMG6/EST1A and POT1. Interacts with the chaperonin-containing T-complex (TRiC) complex; which mediates the folding of WRAP53/TCAB1. Interacts with COIL. Interacts with SMN1. Interacts with RNF8. Interacts with histone H2AX. Post-translationally, phosphorylated at Ser-61 by ATM in response to DNA damage, promoting its interaction with histone H2AX and localization to sites of DNA double-strand breaks.

Its subcellular location is the nucleus. The protein resides in the cajal body. It localises to the chromosome. The protein localises to the telomere. Functionally, RNA chaperone that plays a key role in telomere maintenance and RNA localization to Cajal bodies. Specifically recognizes and binds the Cajal body box (CAB box) present in both small Cajal body RNAs (scaRNAs) and telomerase RNA template component (TERC). Essential component of the telomerase holoenzyme complex, a ribonucleoprotein complex essential for the replication of chromosome termini that elongates telomeres in most eukaryotes. In the telomerase holoenzyme complex, required to stimulate the catalytic activity of the complex. Acts by specifically binding the CAB box of the TERC RNA and controlling the folding of the CR4/CR5 region of the TERC RNA, a critical step for telomerase activity. In addition, also controls telomerase holoenzyme complex localization to Cajal body. During S phase, required for delivery of TERC to telomeres during S phase and for telomerase activity. In addition to its role in telomere maintenance, also required for Cajal body formation, probably by mediating localization of scaRNAs to Cajal bodies. Also plays a role in DNA repair: phosphorylated by ATM in response to DNA damage and relocalizes to sites of DNA double-strand breaks to promote the repair of DNA double-strand breaks. Acts by recruiting the ubiquitin ligase RNF8 to DNA breaks and promote both homologous recombination (HR) and non-homologous end joining (NHEJ). The sequence is that of Telomerase Cajal body protein 1 from Rattus norvegicus (Rat).